We begin with the raw amino-acid sequence, 257 residues long: Triosephosphate isomerase (257 aa).

Substrate is bound at residue Asn9–Lys11. The active-site Electrophile is the His97. Catalysis depends on Glu169, which acts as the Proton acceptor. Substrate is bound by residues Gly175, Ser214, and Gly235–Gly236.

This sequence belongs to the triosephosphate isomerase family. As to quaternary structure, homodimer.

Its subcellular location is the cytoplasm. It catalyses the reaction D-glyceraldehyde 3-phosphate = dihydroxyacetone phosphate. It participates in carbohydrate biosynthesis; gluconeogenesis. The protein operates within carbohydrate degradation; glycolysis; D-glyceraldehyde 3-phosphate from glycerone phosphate: step 1/1. In terms of biological role, involved in the gluconeogenesis. Catalyzes stereospecifically the conversion of dihydroxyacetone phosphate (DHAP) to D-glyceraldehyde-3-phosphate (G3P). The sequence is that of Triosephosphate isomerase from Vibrio cholerae serotype O1 (strain ATCC 39315 / El Tor Inaba N16961).